Here is a 396-residue protein sequence, read N- to C-terminus: L-lactate dehydrogenase (396 aa).

In terms of domain architecture, FMN hydroxy acid dehydrogenase spans methionine 1–glycine 380. Residue tyrosine 24 coordinates substrate. The FMN site is built by serine 106 and glutamine 127. A substrate-binding site is contributed by tyrosine 129. Threonine 155 is an FMN binding site. Substrate is bound at residue arginine 164. Lysine 251 serves as a coordination point for FMN. The Proton acceptor role is filled by histidine 275. Substrate is bound at residue arginine 278. Aspartate 306–arginine 330 lines the FMN pocket.

Belongs to the FMN-dependent alpha-hydroxy acid dehydrogenase family. FMN serves as cofactor.

The protein resides in the cell inner membrane. The enzyme catalyses (S)-lactate + A = pyruvate + AH2. Its function is as follows. Catalyzes the conversion of L-lactate to pyruvate. Is coupled to the respiratory chain. The chain is L-lactate dehydrogenase from Salmonella heidelberg (strain SL476).